The sequence spans 339 residues: Protein pelota homolog (339 aa).

The protein belongs to the eukaryotic release factor 1 family. Pelota subfamily. As to quaternary structure, monomer. A divalent metal cation serves as cofactor.

It is found in the cytoplasm. Its function is as follows. May function in recognizing stalled ribosomes, interact with stem-loop structures in stalled mRNA molecules, and effect endonucleolytic cleavage of the mRNA. May play a role in the release non-functional ribosomes and degradation of damaged mRNAs. Has endoribonuclease activity. This Thermoplasma acidophilum (strain ATCC 25905 / DSM 1728 / JCM 9062 / NBRC 15155 / AMRC-C165) protein is Protein pelota homolog (pelA).